The chain runs to 906 residues: Inter-alpha-trypsin inhibitor heavy chain H1 (906 aa).

Positions 1 to 22 are cleaved as a signal peptide; it reads MGLRGLLCVCLVSLLALQAVAA. The propeptide occupies 23–29; sequence QGSPTRN. The VIT domain occupies 32–161; sequence GGKKRMAVDA…KATFRLTYEE (130 aa). The S-linked (Hex...) cysteine glycan is linked to Cys-55. Ser-124 carries the phosphoserine modification. In terms of domain architecture, VWFA spans 287–470; the sequence is NVVFVIDISS…QQLQGFYEQV (184 aa). Thr-397 and Thr-402 each carry phosphothreonine. Residue Asn-583 is glycosylated (N-linked (GlcNAc...) asparagine). Ser-643 is a glycosylation site (O-linked (GalNAc...) serine). The O-linked (GalNAc...) threonine glycan is linked to Thr-648. Asp-667 bears the Aspartate 1-(chondroitin 4-sulfate)-ester mark. Residues 668-906 constitute a propeptide that is removed on maturation; it reads PHFLIHVPQK…HTDYIVPDIF (239 aa). Residue Asn-745 is glycosylated (N-linked (GlcNAc...) asparagine).

The protein belongs to the ITIH family. In terms of assembly, I-alpha-I plasma protease inhibitors are assembled from one or two heavy chains (HC) and one light chain, bikunin. Inter-alpha-inhibitor (I-alpha-I) is composed of ITIH1/HC1, ITIH2/HC2 and bikunin. Interacts with TNFAIP6 (via Link and CUB domains). In terms of processing, heavy chains are linked to bikunin via chondroitin 4-sulfate esterified to the alpha-carboxyl of the C-terminal aspartate after propeptide cleavage. The S-linked glycan is composed of two 6-carbon sugars, possibly Glc or Gal.

The protein localises to the secreted. Its function is as follows. May act as a carrier of hyaluronan in serum or as a binding protein between hyaluronan and other matrix protein, including those on cell surfaces in tissues to regulate the localization, synthesis and degradation of hyaluronan which are essential to cells undergoing biological processes. This chain is Inter-alpha-trypsin inhibitor heavy chain H1 (ITIH1), found in Bos taurus (Bovine).